The chain runs to 75 residues: Small ribosomal subunit protein bS18 (75 aa).

This sequence belongs to the bacterial ribosomal protein bS18 family. As to quaternary structure, part of the 30S ribosomal subunit. Forms a tight heterodimer with protein bS6.

Functionally, binds as a heterodimer with protein bS6 to the central domain of the 16S rRNA, where it helps stabilize the platform of the 30S subunit. The chain is Small ribosomal subunit protein bS18 from Methylobacillus flagellatus (strain ATCC 51484 / DSM 6875 / VKM B-1610 / KT).